The following is a 245-amino-acid chain: Suppressor of aph-1 (245 aa).

The region spanning 12 to 60 is the GYF domain; it reads DTKWHYLGPDSEKYGPYMSKDMLFWLQAGYFNDGLQLKTENEPNYHTLG. Residues 126 to 166 form a disordered region; it reads NQNGPPMGAQMHSQPPSEPIDAGSLSHTPDSENETRLNEQT.

Its function is as follows. Involved in negative regulation of early and late embryonic Notch signaling. In Caenorhabditis elegans, this protein is Suppressor of aph-1.